We begin with the raw amino-acid sequence, 78 residues long: UPF0369 protein RP167 (78 aa).

The protein belongs to the SDHAF4 family.

The polypeptide is UPF0369 protein RP167 (Rickettsia prowazekii (strain Madrid E)).